We begin with the raw amino-acid sequence, 398 residues long: Nicotinate phosphoribosyltransferase (398 aa).

His-214 carries the post-translational modification Phosphohistidine; by autocatalysis.

This sequence belongs to the NAPRTase family. In terms of processing, transiently phosphorylated on a His residue during the reaction cycle. Phosphorylation strongly increases the affinity for substrates and increases the rate of nicotinate D-ribonucleotide production. Dephosphorylation regenerates the low-affinity form of the enzyme, leading to product release.

The catalysed reaction is nicotinate + 5-phospho-alpha-D-ribose 1-diphosphate + ATP + H2O = nicotinate beta-D-ribonucleotide + ADP + phosphate + diphosphate. Its pathway is cofactor biosynthesis; NAD(+) biosynthesis; nicotinate D-ribonucleotide from nicotinate: step 1/1. Catalyzes the synthesis of beta-nicotinate D-ribonucleotide from nicotinate and 5-phospho-D-ribose 1-phosphate at the expense of ATP. This Xanthomonas campestris pv. campestris (strain B100) protein is Nicotinate phosphoribosyltransferase.